Consider the following 71-residue polypeptide: Protein SlyX homolog (71 aa).

This sequence belongs to the SlyX family.

This is Protein SlyX homolog from Azotobacter vinelandii (strain DJ / ATCC BAA-1303).